The following is a 313-amino-acid chain: Homoserine O-succinyltransferase (313 aa).

Catalysis depends on Cys-142, which acts as the Acyl-thioester intermediate. 2 residues coordinate substrate: Lys-163 and Ser-192. The active-site Proton acceptor is His-235. Glu-237 is a catalytic residue. Arg-249 is a substrate binding site.

Belongs to the MetA family.

It is found in the cytoplasm. The enzyme catalyses L-homoserine + succinyl-CoA = O-succinyl-L-homoserine + CoA. The protein operates within amino-acid biosynthesis; L-methionine biosynthesis via de novo pathway; O-succinyl-L-homoserine from L-homoserine: step 1/1. Transfers a succinyl group from succinyl-CoA to L-homoserine, forming succinyl-L-homoserine. This is Homoserine O-succinyltransferase from Vibrio campbellii (strain ATCC BAA-1116).